A 212-amino-acid polypeptide reads, in one-letter code: Pyridoxine/pyridoxamine 5'-phosphate oxidase (212 aa).

Substrate is bound by residues 8-11 (RREY) and Lys-66. Residues 61-66 (RIVLLK), 76-77 (FT), Arg-82, Lys-83, and Gln-105 contribute to the FMN site. Tyr-123, Arg-127, and Ser-131 together coordinate substrate. FMN is bound by residues 140-141 (QS) and Trp-185. 191–193 (RLH) lines the substrate pocket. Arg-195 contacts FMN.

This sequence belongs to the pyridoxamine 5'-phosphate oxidase family. Homodimer. Requires FMN as cofactor.

It catalyses the reaction pyridoxamine 5'-phosphate + O2 + H2O = pyridoxal 5'-phosphate + H2O2 + NH4(+). The enzyme catalyses pyridoxine 5'-phosphate + O2 = pyridoxal 5'-phosphate + H2O2. The protein operates within cofactor metabolism; pyridoxal 5'-phosphate salvage; pyridoxal 5'-phosphate from pyridoxamine 5'-phosphate: step 1/1. It functions in the pathway cofactor metabolism; pyridoxal 5'-phosphate salvage; pyridoxal 5'-phosphate from pyridoxine 5'-phosphate: step 1/1. Its function is as follows. Catalyzes the oxidation of either pyridoxine 5'-phosphate (PNP) or pyridoxamine 5'-phosphate (PMP) into pyridoxal 5'-phosphate (PLP). The polypeptide is Pyridoxine/pyridoxamine 5'-phosphate oxidase (Shewanella denitrificans (strain OS217 / ATCC BAA-1090 / DSM 15013)).